A 128-amino-acid chain; its full sequence is S-protein homolog 5 (128 aa).

A signal peptide spans 1 to 20; it reads MEKVSIVCFFFFLLFGSGYG.

It belongs to the plant self-incompatibility (S1) protein family.

The protein resides in the secreted. The polypeptide is S-protein homolog 5 (Arabidopsis thaliana (Mouse-ear cress)).